The chain runs to 93 residues: Alpha-defensin 13 (93 aa).

The N-terminal stretch at 1-19 (MKTLVLLSALVLLAFQVQA) is a signal peptide. Residues 20 to 58 (DPIQNTDEETKTEEQPGEEDQAVSVSFGDPEGTSLQEES) constitute a propeptide that is removed on maturation. The segment at 22–54 (IQNTDEETKTEEQPGEEDQAVSVSFGDPEGTSL) is disordered. Intrachain disulfides connect cysteine 64/cysteine 92, cysteine 66/cysteine 81, and cysteine 71/cysteine 91.

The protein belongs to the alpha-defensin family. In terms of tissue distribution, paneth cells of the small bowel.

The protein localises to the secreted. In terms of biological role, probably contributes to the antimicrobial barrier function of the small bowel mucosa. In Mus musculus (Mouse), this protein is Alpha-defensin 13 (Defa13).